The chain runs to 147 residues: Ribonuclease H (147 aa).

The RNase H type-1 domain occupies 1-142; that stretch reads MTEIVEIFTD…ADALARSAIT (142 aa). Mg(2+) contacts are provided by aspartate 10, glutamate 48, aspartate 70, and aspartate 134.

Belongs to the RNase H family. Monomer. It depends on Mg(2+) as a cofactor.

The protein localises to the cytoplasm. It carries out the reaction Endonucleolytic cleavage to 5'-phosphomonoester.. Its function is as follows. Endonuclease that specifically degrades the RNA of RNA-DNA hybrids. The polypeptide is Ribonuclease H (Nitrosococcus oceani (strain ATCC 19707 / BCRC 17464 / JCM 30415 / NCIMB 11848 / C-107)).